The following is a 186-amino-acid chain: MGLLTILRQQKLKEREVRVLLLGLDNAGKTTILKCLLNEDVNEVSPTFGFQIRTLEVEGLRFTIWDIGGQKTLRNFWKNYFESTEAIIWVVDSLDDLRLEECRNTLQELLVEEKLLFTSILVLANKSDVSGALSSEEISKILNISKYKSSHWRIFSVSALTGLNIKDAISWLANDLKEIKLGTIDY.

The N-myristoyl glycine moiety is linked to residue G2. GTP is bound by residues G23–T30, D66–Q70, and N125–D128.

This sequence belongs to the small GTPase superfamily. Arf family.

Its subcellular location is the cytoplasm. The protein localises to the cytoskeleton. Has a role in the cofactor-dependent pathway of microtubule biogenesis. Required for growth polarity control. This Schizosaccharomyces pombe (strain 972 / ATCC 24843) (Fission yeast) protein is ADP-ribosylation factor-like protein alp41 (alp41).